The following is a 185-amino-acid chain: DNA-directed RNA polymerase 21 kDa subunit (185 aa).

Belongs to the poxviridae DNA-directed RNA polymerase 22 kDa subunit family. In terms of assembly, the DNA-dependent RNA polymerase used for intermediate and late genes expression consists of eight subunits Rpo30/OPG66, Rpo7/OPG90, Rpo22/OPG103, Rpo147/OPG105, Rpo18/OPG119, Rpo19/OPG131, Rpo132/OPG151 and Rpo35/OPG156. The same holoenzyme, with the addition of the transcription-specificity factor OPG109, is used for early gene expression.

Its subcellular location is the virion. The catalysed reaction is RNA(n) + a ribonucleoside 5'-triphosphate = RNA(n+1) + diphosphate. Its function is as follows. Part of the DNA-dependent RNA polymerase which catalyzes the transcription of viral DNA into RNA using the four ribonucleoside triphosphates as substrates. Responsible for the transcription of early, intermediate and late genes. DNA-dependent RNA polymerase associates with the early transcription factor (ETF), itself composed of OPG118 and OPG133, thereby allowing the early genes transcription. Late transcription, and probably also intermediate transcription, require newly synthesized RNA polymerase. This chain is DNA-directed RNA polymerase 21 kDa subunit (OPG103), found in Oryctolagus cuniculus (Rabbit).